We begin with the raw amino-acid sequence, 75 residues long: DNA-directed RNA polymerase subunit omega (75 aa).

Belongs to the RNA polymerase subunit omega family. In terms of assembly, in cyanobacteria the RNAP catalytic core is composed of 2 alpha, 1 beta, 1 beta', 1 gamma and 1 omega subunit. When a sigma factor is associated with the core the holoenzyme is formed, which can initiate transcription.

The enzyme catalyses RNA(n) + a ribonucleoside 5'-triphosphate = RNA(n+1) + diphosphate. Functionally, promotes RNA polymerase assembly. Latches the N- and C-terminal regions of the beta' subunit thereby facilitating its interaction with the beta and alpha subunits. This Synechococcus sp. (strain WH7803) protein is DNA-directed RNA polymerase subunit omega.